A 686-amino-acid polypeptide reads, in one-letter code: Eukaryotic translation initiation factor 3 subunit B (686 aa).

The tract at residues 1-29 (MAKKHAGADANDSDYNEEPNFEDPPGFVD) is disordered. Over residues 11 to 21 (NDSDYNEEPNF) the composition is skewed to acidic residues. The region spanning 53–137 (SVVVVDNIPK…HTFAVNLFTD (85 aa)) is the RRM domain. WD repeat units follow at residues 203 to 242 (TRER…KIQK), 289 to 327 (DGMS…LLDL), 330 to 365 (IKIP…TLME), 438 to 480 (EIRE…KPSL), and 526 to 571 (PDHF…IKRT). The stretch at 590–642 (AEEKQKEIKKNLKKYYAVFEQKDRLRLTRASKELLEKRAQLRETFMEYRNKRI) forms a coiled coil.

The protein belongs to the eIF-3 subunit B family. Component of the eukaryotic translation initiation factor 3 (eIF-3) complex. The eIF-3 complex interacts with pix. Interacts with mxt.

It is found in the cytoplasm. Its function is as follows. RNA-binding component of the eukaryotic translation initiation factor 3 (eIF-3) complex, which is involved in protein synthesis of a specialized repertoire of mRNAs and, together with other initiation factors, stimulates binding of mRNA and methionyl-tRNAi to the 40S ribosome. The eIF-3 complex specifically targets and initiates translation of a subset of mRNAs involved in cell proliferation. In Drosophila ananassae (Fruit fly), this protein is Eukaryotic translation initiation factor 3 subunit B.